The primary structure comprises 143 residues: Transcriptional regulator MraZ (143 aa).

SpoVT-AbrB domains follow at residues 5–47 and 76–119; these read THSP…SQKE and ASDE…DADA.

It belongs to the MraZ family. Forms oligomers.

It is found in the cytoplasm. It localises to the nucleoid. This chain is Transcriptional regulator MraZ, found in Paenarthrobacter aurescens (strain TC1).